Reading from the N-terminus, the 239-residue chain is uncharacterized protein (239 aa).

This sequence belongs to the initiator RepB protein family.

Functionally, mutations in ORF 239 affects the incN plasmid pUC1 E.coli polA-independence but not its autonomous replication ability. This is an uncharacterized protein from Escherichia coli.